The chain runs to 180 residues: Sec-independent protein translocase protein TatB (180 aa).

Residues 1 to 21 (MFDIGWSELLVIGVVALIAIG) form a helical membrane-spanning segment. The interval 77 to 180 (TRGDLMTRLT…DQTARGAKAS (104 aa)) is disordered. Residues 105 to 129 (ADKPSVSSDAASASGSAAPEAGAAE) show a composition bias toward low complexity.

This sequence belongs to the TatB family. The Tat system comprises two distinct complexes: a TatABC complex, containing multiple copies of TatA, TatB and TatC subunits, and a separate TatA complex, containing only TatA subunits. Substrates initially bind to the TatABC complex, which probably triggers association of the separate TatA complex to form the active translocon.

The protein resides in the cell inner membrane. In terms of biological role, part of the twin-arginine translocation (Tat) system that transports large folded proteins containing a characteristic twin-arginine motif in their signal peptide across membranes. Together with TatC, TatB is part of a receptor directly interacting with Tat signal peptides. TatB may form an oligomeric binding site that transiently accommodates folded Tat precursor proteins before their translocation. The chain is Sec-independent protein translocase protein TatB from Nitrobacter winogradskyi (strain ATCC 25391 / DSM 10237 / CIP 104748 / NCIMB 11846 / Nb-255).